Consider the following 105-residue polypeptide: Large ribosomal subunit protein eL36 (105 aa).

K62 carries the N6-acetyllysine modification.

The protein belongs to the eukaryotic ribosomal protein eL36 family. As to quaternary structure, component of the large ribosomal subunit.

Its subcellular location is the cytoplasm. The protein resides in the cytosol. Functionally, component of the large ribosomal subunit. The ribosome is a large ribonucleoprotein complex responsible for the synthesis of proteins in the cell. The sequence is that of Large ribosomal subunit protein eL36 (Rpl36) from Rattus norvegicus (Rat).